The chain runs to 228 residues: LexA repressor (228 aa).

Positions 26 to 46 form a DNA-binding region, H-T-H motif; it reads FDEMKEALDLRSKSGIHRLIT. Catalysis depends on for autocatalytic cleavage activity residues Ser-149 and Lys-187.

This sequence belongs to the peptidase S24 family. In terms of assembly, homodimer.

The enzyme catalyses Hydrolysis of Ala-|-Gly bond in repressor LexA.. In terms of biological role, represses a number of genes involved in the response to DNA damage (SOS response), including recA and lexA. In the presence of single-stranded DNA, RecA interacts with LexA causing an autocatalytic cleavage which disrupts the DNA-binding part of LexA, leading to derepression of the SOS regulon and eventually DNA repair. This Jannaschia sp. (strain CCS1) protein is LexA repressor.